We begin with the raw amino-acid sequence, 308 residues long: Pantothenate synthetase (308 aa).

39–46 (MGALHDGH) provides a ligand contact to ATP. Catalysis depends on histidine 46, which acts as the Proton donor. Glutamine 71 is a binding site for (R)-pantoate. Residue glutamine 71 participates in beta-alanine binding. 157-160 (GEKD) lines the ATP pocket. Residue glutamine 163 participates in (R)-pantoate binding. Residues valine 186 and 194–197 (MSSR) each bind ATP. Residues 286-308 (IETPAGTAGPDGDRQYAQSPWRN) are disordered.

Belongs to the pantothenate synthetase family. As to quaternary structure, homodimer.

Its subcellular location is the cytoplasm. The catalysed reaction is (R)-pantoate + beta-alanine + ATP = (R)-pantothenate + AMP + diphosphate + H(+). The protein operates within cofactor biosynthesis; (R)-pantothenate biosynthesis; (R)-pantothenate from (R)-pantoate and beta-alanine: step 1/1. Catalyzes the condensation of pantoate with beta-alanine in an ATP-dependent reaction via a pantoyl-adenylate intermediate. The polypeptide is Pantothenate synthetase (Mycolicibacterium paratuberculosis (strain ATCC BAA-968 / K-10) (Mycobacterium paratuberculosis)).